The sequence spans 82 residues: uncharacterized protein (82 aa).

Helical transmembrane passes span 32 to 52 (PFSIALDLVSGTMVGLLIGIL) and 59 to 79 (SKPLFLIIFTIIGMIAGFNII).

The protein localises to the cell membrane. This is an uncharacterized protein from Rickettsia prowazekii (strain Madrid E).